The chain runs to 349 residues: Fructose-1,6-bisphosphatase class 1 (349 aa).

The Mg(2+) site is built by Glu91, Asp110, Leu112, and Asp113. Residues 113–116 (DGSS) and Asn205 contribute to the substrate site. Glu277 contributes to the Mg(2+) binding site.

The protein belongs to the FBPase class 1 family. In terms of assembly, homotetramer. Requires Mg(2+) as cofactor.

Its subcellular location is the cytoplasm. It catalyses the reaction beta-D-fructose 1,6-bisphosphate + H2O = beta-D-fructose 6-phosphate + phosphate. It functions in the pathway carbohydrate biosynthesis; gluconeogenesis. This chain is Fructose-1,6-bisphosphatase class 1, found in Rhizobium meliloti (strain 1021) (Ensifer meliloti).